We begin with the raw amino-acid sequence, 266 residues long: Glucosamine-6-phosphate deaminase (266 aa).

The active-site Proton acceptor; for enolization step is D72. D141 (for ring-opening step) is an active-site residue. The active-site Proton acceptor; for ring-opening step is the H143. E148 acts as the For ring-opening step in catalysis.

The protein belongs to the glucosamine/galactosamine-6-phosphate isomerase family. NagB subfamily. In terms of assembly, homohexamer.

It catalyses the reaction alpha-D-glucosamine 6-phosphate + H2O = beta-D-fructose 6-phosphate + NH4(+). The protein operates within amino-sugar metabolism; N-acetylneuraminate degradation; D-fructose 6-phosphate from N-acetylneuraminate: step 5/5. Its activity is regulated as follows. Allosterically activated by N-acetylglucosamine 6-phosphate (GlcNAc6P). Functionally, catalyzes the reversible isomerization-deamination of glucosamine 6-phosphate (GlcN6P) to form fructose 6-phosphate (Fru6P) and ammonium ion. The polypeptide is Glucosamine-6-phosphate deaminase (Enterobacter sp. (strain 638)).